The chain runs to 714 residues: A-kinase anchor protein 5 (714 aa).

2 disordered regions span residues 1 to 146 and 243 to 333; these read METS…GYVR and VLEN…VGHT. The interval 1–164 is essential to the intracellular anchoring function; it reads METSVSEIQI…EIKAQIQPDE (164 aa). 2 positions are modified to phosphoserine: serine 4 and serine 22. Residues 10–32 are compositionally biased toward basic and acidic residues; it reads IETKDEKRPEAASPQKERQERKT. Cysteine 36 carries the S-palmitoyl cysteine lipid modification. Over residues 37-50 the composition is skewed to basic residues; sequence FKRRKKVNKKKAKA. Composition is skewed to basic and acidic residues over residues 54–63 and 88–100; these read TAEETEKHAP and KPSESAEKQKPSE. The AKAP CaM-binding motif lies at 74–94; it reads AGAWASIKRLVTHRKPSESAE. Cysteine 123 carries the S-palmitoyl cysteine lipid modification. The segment covering 243–268 has biased composition (polar residues); the sequence is VLENSAADSPQPVTSTAPLSPATTHQ. A compositionally biased stretch (basic and acidic residues) spans 285–301; that stretch reads GKDDGRRKTAAEEKKSG. The 1; approximate repeat unit spans residues 305–312; the sequence is LGQAEEAS. The tract at residues 305–597 is 28 X 8 AA repeats of V-G-Q-A-E-E-A-T; that stretch reads LGQAEEASSV…PIVGQAEETV (293 aa). The span at 310–323 shows a compositional bias: polar residues; the sequence is EASSVSQADKSVLS. The stretch at 322–329 is one 2; approximate repeat; the sequence is LSQAEEAT. The 3; approximate repeat unit spans residues 330-337; that stretch reads VGHTEEAT. A 4; approximate repeat occupies 350–357; sequence LSQAEEAT. Residues 358–365 form a 5; approximate repeat; sequence VAQAKETV. A 6; approximate repeat occupies 366–373; the sequence is LSQAEEVK. A 7; approximate repeat occupies 398 to 405; the sequence is VSQAEEAI. Residues 414–421 form an 8; approximate repeat; it reads MGQAEEAT. Tandem repeats lie at residues 430–437, 438–445, 446–453, 454–461, and 462–469. The 14; approximate repeat unit spans residues 470-477; it reads VGQAGEAT. Residues 486 to 493 form a 15; approximate repeat; it reads VGQAEEAI. Tandem repeats lie at residues 494-501, 502-509, 510-517, and 518-525. A 20; approximate repeat occupies 526-533; the sequence is VDQAEEAT. Residues 534–541 form repeat 21; it reads VGQAEEAT. Residues 542–549 form a 22; approximate repeat; it reads VGQAGEAA. The stretch at 550 to 557 is one 23; approximate repeat; it reads VGQAEEAI. One copy of the 24; approximate repeat lies at 558 to 565; that stretch reads VAQAEEAT. Copy 25 of the repeat occupies 566–573; sequence VGQAGEAT. A 26; approximate repeat occupies 574 to 581; the sequence is VGQAEKAT. One copy of the 27; approximate repeat lies at 582-589; it reads VGQAEEPI. Residues 590–597 form a 28; approximate repeat; that stretch reads VGQAEETV. An RII-beta subunit binding domain region spans residues 675–696; it reads YETLLIETASSLVKNAIELSVE. The tract at residues 697 to 714 is tethers NFATC2 to CRAC channels; the sequence is QLVNEMVSEDNQINTLFQ.

As to quaternary structure, binding protein for dimer of the RII-beta regulatory subunit of cAMP-dependent protein kinase (PKA) and also for the protein kinase C (PKC) and the phosphatase calcineurin (PP2B). Each enzyme is inhibited when bound to the anchoring protein. Also binds the beta2-adrenergic receptor. Part of a complex containing AKAP5, ADCY5, ADCY6 and PDE4C. Interacts with ADCY8, and enhances its phosphorylation at lipid rafts. Interacts with ORAI1 (isoform alpha) (via N-terminus) upon store depletion and in response to LTC4. Does not interact with ORAI2 and ORAI3 paralogs. Interacts (via leucine zipper domain) with NFATC2/NFAT1. Interacts with calmodulin; the interaction is calcium-independent. Interacts with KCNQ2; the interaction may help KCNQ2 channel complex to retain calcium-bound calmodulin. Interacts with KCNK2; the channel is recruited to postsynaptic microdomains by AKAP5 where it can integrate neurotransmitter receptor signals. Part of a complex composed of AKAP5 and ADRB2. In terms of processing, palmitoylated. Palmitoylation at Cys-36 and Cys-123 plays a key role in the targeting of AKAP5 to lipid rafts. Palmitoylation by ZDHHC2 is required for AKAP5 function in LTP-stimulated recycling endosome exocytosis.

Its subcellular location is the postsynaptic recycling endosome membrane. It is found in the cell projection. It localises to the dendrite. The protein localises to the postsynaptic cell membrane. Its function is as follows. Multivalent scaffold protein that anchors the cAMP-dependent protein kinase/PKA to cytoskeletal and/or organelle-associated proteins, targeting the signal carried by cAMP to specific intracellular effectors. Association with the beta2-adrenergic receptor (beta2-AR) not only regulates beta2-AR signaling pathway, but also the activation by PKA by switching off the beta2-AR signaling cascade. Plays a role in long term synaptic potentiation by regulating protein trafficking from the dendritic recycling endosomes to the plasma membrane and controlling both structural and functional plasticity at excitatory synapses. In hippocampal pyramidal neurons, recruits KCNK2/TREK-1 channel at postsynaptic dense bodies microdomains and converts it to a leak channel no longer sensitive to stimulation by arachidonic acid, acidic pH or mechanical stress, nor inhibited by Gq-coupled receptors but still under the negative control of Gs-coupled receptors. Associates with ORAI1 pore-forming subunit of CRAC channels in Ca(2+) signaling microdomains where it recruits NFATC2/NFAT1 and couples store-operated Ca(2+) influx to calmodulin and calcineurin signaling and activation of NFAT-dependent transcriptional responses. In Rattus norvegicus (Rat), this protein is A-kinase anchor protein 5 (Akap5).